Consider the following 851-residue polypeptide: Probable alpha,alpha-trehalose-phosphate synthase [UDP-forming] 7 (851 aa).

Ser-5 is modified (phosphoserine). At Thr-32 the chain carries Phosphothreonine. Residues 59–540 form a glycosyltransferase region; sequence DRMIIVANRL…SRSFLQDLER (482 aa).

In the N-terminal section; belongs to the glycosyltransferase 20 family. This sequence in the C-terminal section; belongs to the trehalose phosphatase family. In terms of assembly, binds to the phosphopeptide-binding site of GRF/14-3-3. Post-translationally, phosphorylated. In terms of tissue distribution, expressed in seedlings, leaves, roots, stems, flowers and siliques.

The catalysed reaction is D-glucose 6-phosphate + UDP-alpha-D-glucose = alpha,alpha-trehalose 6-phosphate + UDP + H(+). This is Probable alpha,alpha-trehalose-phosphate synthase [UDP-forming] 7 (TPS7) from Arabidopsis thaliana (Mouse-ear cress).